The sequence spans 499 residues: Cobyric acid synthase (499 aa).

One can recognise a GATase cobBQ-type domain in the interval 266 to 449 (RLEIAVVRLP…LHGLFDNHLW (184 aa)). The Nucleophile role is filled by C344. Residue H441 is part of the active site.

Belongs to the CobB/CobQ family. CobQ subfamily.

The protein operates within cofactor biosynthesis; adenosylcobalamin biosynthesis. Its function is as follows. Catalyzes amidations at positions B, D, E, and G on adenosylcobyrinic A,C-diamide. NH(2) groups are provided by glutamine, and one molecule of ATP is hydrogenolyzed for each amidation. This Synechococcus sp. (strain JA-2-3B'a(2-13)) (Cyanobacteria bacterium Yellowstone B-Prime) protein is Cobyric acid synthase.